The sequence spans 490 residues: Aspartyl/glutamyl-tRNA(Asn/Gln) amidotransferase subunit B (490 aa).

It belongs to the GatB/GatE family. GatB subfamily. As to quaternary structure, heterotrimer of A, B and C subunits.

The enzyme catalyses L-glutamyl-tRNA(Gln) + L-glutamine + ATP + H2O = L-glutaminyl-tRNA(Gln) + L-glutamate + ADP + phosphate + H(+). It carries out the reaction L-aspartyl-tRNA(Asn) + L-glutamine + ATP + H2O = L-asparaginyl-tRNA(Asn) + L-glutamate + ADP + phosphate + 2 H(+). Functionally, allows the formation of correctly charged Asn-tRNA(Asn) or Gln-tRNA(Gln) through the transamidation of misacylated Asp-tRNA(Asn) or Glu-tRNA(Gln) in organisms which lack either or both of asparaginyl-tRNA or glutaminyl-tRNA synthetases. The reaction takes place in the presence of glutamine and ATP through an activated phospho-Asp-tRNA(Asn) or phospho-Glu-tRNA(Gln). In Prochlorococcus marinus (strain MIT 9515), this protein is Aspartyl/glutamyl-tRNA(Asn/Gln) amidotransferase subunit B.